The primary structure comprises 637 residues: ATP-dependent RNA helicase DBP6 (637 aa).

Residues 1–93 (MFAVRFDPSQ…AASDHPDKHN (93 aa)) are disordered. Positions 33 to 84 (DEEDESSEEETESSEDEEEKEKEEVADEDSMDVDDESSGDDDEEAEEGEVDA) are enriched in acidic residues. Residues 198–206 (TFPIQSILL) carry the Q motif motif. The region spanning 222-402 (KNFTRRVGDV…GLQFYNPKLF (181 aa)) is the Helicase ATP-binding domain. 235–242 (ASTGSGKT) is a binding site for ATP. Residues 342 to 345 (DEAD) carry the DEAD box motif. One can recognise a Helicase C-terminal domain in the interval 434–608 (FLLRLLSEIN…EGQEEEAQVL (175 aa)).

It belongs to the DEAD box helicase family. DDX51/DBP6 subfamily. In terms of assembly, associated with pre-ribosomal particles.

Its subcellular location is the nucleus. The protein resides in the nucleolus. The catalysed reaction is ATP + H2O = ADP + phosphate + H(+). Its function is as follows. ATP-binding RNA helicase involved in the biogenesis of 60S ribosomal subunits and is required for the normal formation of 25S and 5.8S rRNAs. The sequence is that of ATP-dependent RNA helicase DBP6 (DBP6) from Vanderwaltozyma polyspora (strain ATCC 22028 / DSM 70294 / BCRC 21397 / CBS 2163 / NBRC 10782 / NRRL Y-8283 / UCD 57-17) (Kluyveromyces polysporus).